The sequence spans 288 residues: Alpha/beta hydrolase domain-containing protein 17B (288 aa).

Active-site charge relay system residues include Ser170, Asp235, and His264.

The protein belongs to the AB hydrolase superfamily. ABHD17 family. In terms of processing, palmitoylated on cysteine residues located in a cysteine cluster at the N-terminus which promotes membrane localization.

It is found in the cell membrane. Its subcellular location is the recycling endosome membrane. The protein localises to the cell projection. The protein resides in the dendritic spine. It localises to the postsynaptic density membrane. It catalyses the reaction S-hexadecanoyl-L-cysteinyl-[protein] + H2O = L-cysteinyl-[protein] + hexadecanoate + H(+). In terms of biological role, hydrolyzes fatty acids from S-acylated cysteine residues in proteins. Has depalmitoylating activity towards nras. This is Alpha/beta hydrolase domain-containing protein 17B from Xenopus laevis (African clawed frog).